The primary structure comprises 124 residues: Small ribosomal subunit protein uS12 (124 aa).

Aspartate 89 carries the 3-methylthioaspartic acid modification. Residues 105 to 124 (AGVKDRRQSRSKYGAKRPKA) are disordered. Residues 113-124 (SRSKYGAKRPKA) show a composition bias toward basic residues.

The protein belongs to the universal ribosomal protein uS12 family. As to quaternary structure, part of the 30S ribosomal subunit. Contacts proteins S8 and S17. May interact with IF1 in the 30S initiation complex.

In terms of biological role, with S4 and S5 plays an important role in translational accuracy. Interacts with and stabilizes bases of the 16S rRNA that are involved in tRNA selection in the A site and with the mRNA backbone. Located at the interface of the 30S and 50S subunits, it traverses the body of the 30S subunit contacting proteins on the other side and probably holding the rRNA structure together. The combined cluster of proteins S8, S12 and S17 appears to hold together the shoulder and platform of the 30S subunit. The chain is Small ribosomal subunit protein uS12 (rpsL) from Synechococcus elongatus (strain ATCC 33912 / PCC 7942 / FACHB-805) (Anacystis nidulans R2).